A 251-amino-acid chain; its full sequence is MADESKDTTHFGYRTVAKDEKADMVADVFHSVAAKYDLMNDLMSFGIHRVWKRFTIDCSGVRRGQRVLDLAGGTGDLTAKFSRLVGETGEVVLADINSSMLKVGREKLRNKGIIGNVNYVQANAEALPFPDNYFDCITIAFGLRNVTEKENALASMFRVLKPGGRLLVLEFSKPQFEPLSKAYDAYSFHILPRIGEVVAKDAGSYRYLAESIRMHPDQETLKQMMADVGFENTTYHNLTGGIVALHRGFKF.

Residues T74, D95, and 123–124 contribute to the S-adenosyl-L-methionine site; that span reads NA.

Belongs to the class I-like SAM-binding methyltransferase superfamily. MenG/UbiE family.

The catalysed reaction is a 2-demethylmenaquinol + S-adenosyl-L-methionine = a menaquinol + S-adenosyl-L-homocysteine + H(+). It carries out the reaction a 2-methoxy-6-(all-trans-polyprenyl)benzene-1,4-diol + S-adenosyl-L-methionine = a 5-methoxy-2-methyl-3-(all-trans-polyprenyl)benzene-1,4-diol + S-adenosyl-L-homocysteine + H(+). The protein operates within quinol/quinone metabolism; menaquinone biosynthesis; menaquinol from 1,4-dihydroxy-2-naphthoate: step 2/2. Its pathway is cofactor biosynthesis; ubiquinone biosynthesis. Its function is as follows. Methyltransferase required for the conversion of demethylmenaquinol (DMKH2) to menaquinol (MKH2) and the conversion of 2-polyprenyl-6-methoxy-1,4-benzoquinol (DDMQH2) to 2-polyprenyl-3-methyl-6-methoxy-1,4-benzoquinol (DMQH2). The sequence is that of Ubiquinone/menaquinone biosynthesis C-methyltransferase UbiE from Erwinia tasmaniensis (strain DSM 17950 / CFBP 7177 / CIP 109463 / NCPPB 4357 / Et1/99).